The primary structure comprises 287 residues: Large ribosomal subunit protein uL2 (287 aa).

2 disordered regions span residues 25-57 and 203-287; these read TKTEPEKSLTTSKHRAKGRNNTGRITSRRRGGG and LSAG…GRES. 2 stretches are compositionally biased toward basic residues: residues 209–220 and 259–287; these read GRNRWKGRRPKV and TRNRKKLSSKFIVRRRRKSSKRGRGGRES.

Belongs to the universal ribosomal protein uL2 family. In terms of assembly, part of the 50S ribosomal subunit. Forms a bridge to the 30S subunit in the 70S ribosome.

One of the primary rRNA binding proteins. Required for association of the 30S and 50S subunits to form the 70S ribosome, for tRNA binding and peptide bond formation. It has been suggested to have peptidyltransferase activity; this is somewhat controversial. Makes several contacts with the 16S rRNA in the 70S ribosome. This chain is Large ribosomal subunit protein uL2, found in Nostoc punctiforme (strain ATCC 29133 / PCC 73102).